The sequence spans 73 residues: Conotoxin im23b (73 aa).

The first 22 residues, 1–22 (MIMRMTLTLFVLVVMTAASASG), serve as a signal peptide directing secretion. Residues 23-28 (DALTEA) constitute a propeptide that is removed on maturation. 3 cysteine pairs are disulfide-bonded: Cys34–Cys41, Cys45–Cys55, and Cys56–Cys71.

Belongs to the conotoxin K superfamily. Expressed by the venom duct.

It is found in the secreted. Functionally, neurotoxin that induces excitatory symptoms in mice following intracranial administration. No symptoms are observed after intraperitoneal and intravenous (tail vein) injections. This is Conotoxin im23b from Conus imperialis (Imperial cone).